Here is a 182-residue protein sequence, read N- to C-terminus: Probable peptidyl-prolyl cis-trans isomerase A (182 aa).

The 169-residue stretch at 13-181 (QNATATLHTN…EPVVIDSITI (169 aa)) folds into the PPIase cyclophilin-type domain. Positions 161-182 (TTATDGNDRPTEPVVIDSITIS) are disordered.

The protein belongs to the cyclophilin-type PPIase family.

The protein resides in the cytoplasm. The enzyme catalyses [protein]-peptidylproline (omega=180) = [protein]-peptidylproline (omega=0). Its function is as follows. PPIases accelerate the folding of proteins. It catalyzes the cis-trans isomerization of proline imidic peptide bonds in oligopeptides. This Mycobacterium leprae (strain TN) protein is Probable peptidyl-prolyl cis-trans isomerase A (ppiA).